The following is a 172-amino-acid chain: Trypsin inhibitor DE-3 (172 aa).

Disulfide bonds link cysteine 39/cysteine 83 and cysteine 132/cysteine 139.

It belongs to the protease inhibitor I3 (leguminous Kunitz-type inhibitor) family.

Its function is as follows. Inhibition of trypsin. The chain is Trypsin inhibitor DE-3 from Erythrina variegata (Indian coral tree).